Here is an 831-residue protein sequence, read N- to C-terminus: Protein translocase subunit SecA (831 aa).

ATP is bound by residues glutamine 88, glycine 106–threonine 110, and aspartate 495. Zn(2+)-binding residues include cysteine 816, cysteine 818, cysteine 827, and cysteine 828.

This sequence belongs to the SecA family. Monomer and homodimer. Part of the essential Sec protein translocation apparatus which comprises SecA, SecYEG and auxiliary proteins SecDF-YajC and YidC. Requires Zn(2+) as cofactor.

It localises to the cell membrane. Its subcellular location is the cytoplasm. The enzyme catalyses ATP + H2O + cellular proteinSide 1 = ADP + phosphate + cellular proteinSide 2.. In terms of biological role, part of the Sec protein translocase complex. Interacts with the SecYEG preprotein conducting channel. Has a central role in coupling the hydrolysis of ATP to the transfer of proteins into and across the cell membrane, serving as an ATP-driven molecular motor driving the stepwise translocation of polypeptide chains across the membrane. The polypeptide is Protein translocase subunit SecA (Lawsonia intracellularis (strain PHE/MN1-00)).